The chain runs to 412 residues: Putative competence-damage inducible protein (412 aa).

It belongs to the CinA family.

The chain is Putative competence-damage inducible protein from Bacillus cereus (strain G9842).